Reading from the N-terminus, the 620-residue chain is UDP-glucose:protein N-beta-glucosyltransferase (620 aa).

This sequence belongs to the glycosyltransferase 41 family. Requires Does not require a metal cofactor. as cofactor.

The protein resides in the cytoplasm. It carries out the reaction L-asparaginyl-[protein] + UDP-alpha-D-glucose = N(4)-(beta-D-glucosyl)-L-asparaginyl-[protein] + UDP + H(+). Its pathway is protein modification; protein glycosylation. Functionally, inverting glycosyltransferase that catalyzes the transfer of one glucose moiety from UDP-glucose to an asparagine residue in peptides and proteins containing the NX(S/T) motif, resulting in their modification with a beta-linked 1,N-glucose. Likely acts as a key component of a general protein glycosylation system. Also accepts UDP-galactose as a substrate donor, albeit with low efficiency. Cannot use UDP-GlcNAc or UDP-GalNAc as substrate donor. This is UDP-glucose:protein N-beta-glucosyltransferase from Actinobacillus pleuropneumoniae serotype 7 (strain AP76).